A 262-amino-acid polypeptide reads, in one-letter code: 3-methyl-2-oxobutanoate hydroxymethyltransferase (262 aa).

Residues aspartate 44 and aspartate 83 each contribute to the Mg(2+) site. 3-methyl-2-oxobutanoate-binding positions include 44–45 (DS), aspartate 83, and lysine 113. Glutamate 115 serves as a coordination point for Mg(2+). Glutamate 182 acts as the Proton acceptor in catalysis.

The protein belongs to the PanB family. In terms of assembly, homodecamer; pentamer of dimers. Mg(2+) is required as a cofactor.

It localises to the cytoplasm. It carries out the reaction 3-methyl-2-oxobutanoate + (6R)-5,10-methylene-5,6,7,8-tetrahydrofolate + H2O = 2-dehydropantoate + (6S)-5,6,7,8-tetrahydrofolate. The protein operates within cofactor biosynthesis; (R)-pantothenate biosynthesis; (R)-pantoate from 3-methyl-2-oxobutanoate: step 1/2. Catalyzes the reversible reaction in which hydroxymethyl group from 5,10-methylenetetrahydrofolate is transferred onto alpha-ketoisovalerate to form ketopantoate. The polypeptide is 3-methyl-2-oxobutanoate hydroxymethyltransferase (Picosynechococcus sp. (strain ATCC 27264 / PCC 7002 / PR-6) (Agmenellum quadruplicatum)).